Here is a 220-residue protein sequence, read N- to C-terminus: MFSRFARAFPKILASGASQRTFATVQKAFANPTSKKLIVGSSLLIGSAFATTSFVACENKSVPLVGLPGTNQERSFIAIKVSSTQRRLIGEIIARFEKKGFKLVGIKILVPTPEHAAKHYEDLNKKPFFNGLVKFFSSGAVVAMVFEGKDVVRTGRVLIGATDPSQSAPGTIRFDLCIETGRNIIHGSDSNESAAHEIALWFKEDEIANWVSTNPVYEKM.

The transit peptide at 1–57 (MFSRFARAFPKILASGASQRTFATVQKAFANPTSKKLIVGSSLLIGSAFATTSFVAC) directs the protein to the mitochondrion. ATP contacts are provided by Lys80, Phe128, Arg156, Thr162, Arg173, and Asn183. The Pros-phosphohistidine intermediate role is filled by His186.

This sequence belongs to the NDK family. Mg(2+) serves as cofactor.

The protein resides in the mitochondrion intermembrane space. The catalysed reaction is a 2'-deoxyribonucleoside 5'-diphosphate + ATP = a 2'-deoxyribonucleoside 5'-triphosphate + ADP. It carries out the reaction a ribonucleoside 5'-diphosphate + ATP = a ribonucleoside 5'-triphosphate + ADP. Functionally, major role in the synthesis of nucleoside triphosphates other than ATP. The ATP gamma phosphate is transferred to the NDP beta phosphate via a ping-pong mechanism, using a phosphorylated active-site intermediate. The chain is Nucleoside diphosphate kinase, mitochondrial (ndkM) from Dictyostelium discoideum (Social amoeba).